The following is a 212-amino-acid chain: ER lumen protein-retaining receptor 2 (212 aa).

Residues 1-4 (MNVF) are Lumenal-facing. Residues 5–24 (RLSGDLSHLAAIIILLLKIW) form a helical membrane-spanning segment. At 25 to 32 (KSRSCAGI) the chain is on the cytoplasmic side. The chain crosses the membrane as a helical span at residues 33–52 (SGKSQLLFALVFTTRYLDLL). Positions 47 to 48 (RY) are interaction with the K-D-E-L motif on target proteins. The Lumenal portion of the chain corresponds to 53–58 (TSFISL). A helical transmembrane segment spans residues 59-79 (YNTSMKVIYIGCAYATVYLIY). The Cytoplasmic portion of the chain corresponds to 80–92 (MKFKATYDGNHDT). Residues 93–110 (FRVEFLVVPVGGLSVLVN) form a helical membrane-spanning segment. The Lumenal portion of the chain corresponds to 111–116 (HDFSPL). Residues 117 to 135 (EILWTFSIYLESVAILPQL) traverse the membrane as a helical segment. Topologically, residues 136 to 149 (FMISKTGEAETITT) are cytoplasmic. Residues 150-168 (HYLFFLGLYRALYLFNWIW) traverse the membrane as a helical segment. The interval 159 to 169 (RALYLFNWIWR) is interaction with the K-D-E-L motif on target proteins. At 169–178 (RYSFEGFFDL) the chain is on the lumenal side. Residues 179–199 (IAIVAGVVQTILYCDFFYLYV) traverse the membrane as a helical segment. At 200–212 (TKVLKGKKLSLPA) the chain is on the cytoplasmic side. The segment at 204-207 (KGKK) is important for recycling of cargo proteins with the sequence motif K-D-E-L from the Golgi to the endoplasmic reticulum.

The protein belongs to the ERD2 family.

Its subcellular location is the endoplasmic reticulum membrane. The protein resides in the golgi apparatus membrane. It localises to the cytoplasmic vesicle. It is found in the COPI-coated vesicle membrane. In terms of biological role, receptor for the C-terminal sequence motif K-D-E-L that is present on endoplasmic reticulum resident proteins and that mediates their recycling from the Golgi back to the endoplasmic reticulum. Binding is pH dependent, and is optimal at pH 5-5.4. The chain is ER lumen protein-retaining receptor 2 (kdelr2) from Xenopus tropicalis (Western clawed frog).